We begin with the raw amino-acid sequence, 139 residues long: UDP-glucose 4-epimerase (139 aa).

Residues Y11 to I12, D31 to S36, D58 to I59, F80 to K84, N99, and S124 contribute to the NAD(+) site. S124 is a binding site for substrate. Y136 serves as the catalytic Proton acceptor.

Belongs to the NAD(P)-dependent epimerase/dehydratase family. As to quaternary structure, homodimer. The cofactor is NAD(+).

It catalyses the reaction UDP-alpha-D-glucose = UDP-alpha-D-galactose. It participates in carbohydrate metabolism; galactose metabolism. Involved in the metabolism of galactose. Catalyzes the conversion of UDP-galactose (UDP-Gal) to UDP-glucose (UDP-Glc) through a mechanism involving the transient reduction of NAD. This Klebsiella pneumoniae protein is UDP-glucose 4-epimerase (galE).